Reading from the N-terminus, the 229-residue chain is Imidazoleglycerol-phosphate dehydratase (229 aa).

Belongs to the imidazoleglycerol-phosphate dehydratase family.

The enzyme catalyses D-erythro-1-(imidazol-4-yl)glycerol 3-phosphate = 3-(imidazol-4-yl)-2-oxopropyl phosphate + H2O. It participates in amino-acid biosynthesis; L-histidine biosynthesis; L-histidine from 5-phospho-alpha-D-ribose 1-diphosphate: step 6/9. In Neurospora crassa (strain ATCC 24698 / 74-OR23-1A / CBS 708.71 / DSM 1257 / FGSC 987), this protein is Imidazoleglycerol-phosphate dehydratase.